The chain runs to 147 residues: Large ribosomal subunit protein uL15 (147 aa).

The interval 1 to 58 (MRLHDLKPAEGSTKKKKRVGRGIGSGHGKTSGRGHKGQNARSGGGVRPGFEGGQMPLT) is disordered. Residues 42–52 (SGGGVRPGFEG) show a composition bias toward gly residues.

This sequence belongs to the universal ribosomal protein uL15 family. Part of the 50S ribosomal subunit.

In terms of biological role, binds to the 23S rRNA. The chain is Large ribosomal subunit protein uL15 from Caldanaerobacter subterraneus subsp. tengcongensis (strain DSM 15242 / JCM 11007 / NBRC 100824 / MB4) (Thermoanaerobacter tengcongensis).